A 366-amino-acid polypeptide reads, in one-letter code: Ubiquitin carboxyl-terminal hydrolase 46 (366 aa).

The USP domain occupies 35 to 365 (FGLVNFGNTC…SGYILFYQSR (331 aa)). Cys44 functions as the Nucleophile in the catalytic mechanism. Zn(2+)-binding residues include Cys182, Cys185, Cys229, and Cys232. Residue His313 is the Proton acceptor of the active site.

This sequence belongs to the peptidase C19 family. USP12/USP46 subfamily. Interacts with WDR48. Interacts with WDR20. Interacts with DMWD. Component of the USP46/WDR20/WDR48 deubiquitinating complex. In terms of tissue distribution, broadly expressed.

It localises to the cytoplasm. It catalyses the reaction Thiol-dependent hydrolysis of ester, thioester, amide, peptide and isopeptide bonds formed by the C-terminal Gly of ubiquitin (a 76-residue protein attached to proteins as an intracellular targeting signal).. Its activity is regulated as follows. Activated by interaction with WDR48. Deubiquitinating enzyme that plays a role in behavior, possibly by regulating GABA action. May act by mediating the deubiquitination of GAD1/GAD67. Has almost no deubiquitinating activity by itself and requires the interaction with WDR48 to have a high activity. Not involved in deubiquitination of monoubiquitinated FANCD2. The polypeptide is Ubiquitin carboxyl-terminal hydrolase 46 (USP46) (Homo sapiens (Human)).